Here is a 470-residue protein sequence, read N- to C-terminus: Methylenetetrahydrofolate--tRNA-(uracil-5-)-methyltransferase TrmFO (470 aa).

10 to 15 is an FAD binding site; that stretch reads GAGLAG.

Belongs to the MnmG family. TrmFO subfamily. Requires FAD as cofactor.

It is found in the cytoplasm. It catalyses the reaction uridine(54) in tRNA + (6R)-5,10-methylene-5,6,7,8-tetrahydrofolate + NADH + H(+) = 5-methyluridine(54) in tRNA + (6S)-5,6,7,8-tetrahydrofolate + NAD(+). The enzyme catalyses uridine(54) in tRNA + (6R)-5,10-methylene-5,6,7,8-tetrahydrofolate + NADPH + H(+) = 5-methyluridine(54) in tRNA + (6S)-5,6,7,8-tetrahydrofolate + NADP(+). Catalyzes the folate-dependent formation of 5-methyl-uridine at position 54 (M-5-U54) in all tRNAs. This Prochlorococcus marinus (strain MIT 9301) protein is Methylenetetrahydrofolate--tRNA-(uracil-5-)-methyltransferase TrmFO.